A 1044-amino-acid polypeptide reads, in one-letter code: Elongation factor 3 (1044 aa).

One copy of the HEAT 1 repeat lies at 5–42; it reads AQSIKVLGELFEKLSVATAENREATATEIASFLNGNII. Residues Ile-42 and His-44 each contribute to the ADP site. An HEAT 2 repeat occupies 45-80; the sequence is DVPEEFFKNLTKAVKDKKTAAAALETIAHIANENNL. An ADP-binding site is contributed by Ser-83. HEAT repeat units lie at residues 86-123, 124-162, 166-203, 205-241, 242-279, and 285-323; these read PYIV…AIDP, VAIK…AAKT, LRMP…TVDN, DIER…EVTP, ATLS…LVED, and PFLE…VGNV. ADP is bound by residues Thr-392, His-396, and Glu-397. 2 ABC transporter domains span residues 426–641 and 667–993; these read DEGE…YYEL and VKVS…KKED. ADP-binding residues include Asn-703, Glu-922, Asn-925, and His-951. Residues 975–1044 are disordered; the sequence is GHNWVSGQGS…DAYVSSDDEF (70 aa). Over residues 987-999 the composition is skewed to basic and acidic residues; the sequence is RLEKKEDEGDKFD. The span at 1009-1031 shows a compositional bias: basic residues; the sequence is NKKKKLSSAELRKKKKERMKKKK.

It belongs to the ABC transporter superfamily. ABCF family. EF3 subfamily. As to quaternary structure, monomer.

The protein resides in the cytoplasm. It carries out the reaction ATP + H2O = ADP + phosphate + H(+). It functions in the pathway protein biosynthesis; polypeptide chain elongation. In terms of biological role, ribosome-dependent ATPase that functions in cytoplasmic translation elongation. Required for the ATP-dependent release of deacylated tRNA from the ribosomal E-site during protein biosynthesis. Stimulates the eEF1A-dependent binding of aminoacyl-tRNA to the ribosomal A-site, which has reduced affinity for tRNA as long as the E-site is occupied. Assists translation termination by stimulating the release of nascent protein from the ribosome by release factors. In Eremothecium gossypii (strain ATCC 10895 / CBS 109.51 / FGSC 9923 / NRRL Y-1056) (Yeast), this protein is Elongation factor 3 (TEF3).